A 378-amino-acid chain; its full sequence is Endopolygalacturonase I (378 aa).

Positions 1–20 (MHLNTTLLVSLALGAASVLA) are cleaved as a signal peptide. A propeptide spanning residues 21-39 (SPAPPAITAPPTAEEIAKR) is cleaved from the precursor. The cysteines at positions 43 and 61 are disulfide-linked. Residue Thr44 is glycosylated (O-linked (Man...) threonine). 7 O-linked (Man...) serine glycosylation sites follow: Ser46, Ser48, Ser52, Ser53, Ser55, Ser57, and Ser62. A glycan (O-linked (Man...) threonine) is linked at Thr63. Ser73 carries an O-linked (Man...) serine glycan. PbH1 repeat units follow at residues 174-204 (SDYLTLKDITIDNSDGDDNGGHNTDAFDIGT), 205-226 (STYVTISGATVYNQDDCVAVNS), 227-247 (GENIYFSGGYCSGGHGLSIGS), 256-277 (VKNVTFVDSTIINSDNGVRIKT), and 285-307 (VSDVTYKDITLTSIAKYGIVVQQ). The Proton donor role is filled by Asp219. Cys221 and Cys237 are oxidised to a cystine. His241 is a catalytic residue. N-linked (GlcNAc...) asparagine glycosylation occurs at Asn258. Intrachain disulfides connect Cys345-Cys350 and Cys369-Cys378.

This sequence belongs to the glycosyl hydrolase 28 family.

The protein localises to the secreted. It carries out the reaction (1,4-alpha-D-galacturonosyl)n+m + H2O = (1,4-alpha-D-galacturonosyl)n + (1,4-alpha-D-galacturonosyl)m.. Functionally, involved in maceration and soft-rotting of plant tissue. Hydrolyzes the 1,4-alpha glycosidic bonds of de-esterified pectate in the smooth region of the plant cell wall. In Aspergillus aculeatus, this protein is Endopolygalacturonase I (pgaI).